We begin with the raw amino-acid sequence, 736 residues long: 1,4-alpha-glucan branching enzyme GlgB (736 aa).

The active-site Nucleophile is the Asp417. Glu470 (proton donor) is an active-site residue.

The protein belongs to the glycosyl hydrolase 13 family. GlgB subfamily. As to quaternary structure, monomer.

The enzyme catalyses Transfers a segment of a (1-&gt;4)-alpha-D-glucan chain to a primary hydroxy group in a similar glucan chain.. It participates in glycan biosynthesis; glycogen biosynthesis. In terms of biological role, catalyzes the formation of the alpha-1,6-glucosidic linkages in glycogen by scission of a 1,4-alpha-linked oligosaccharide from growing alpha-1,4-glucan chains and the subsequent attachment of the oligosaccharide to the alpha-1,6 position. This is 1,4-alpha-glucan branching enzyme GlgB from Pseudomonas putida (strain ATCC 47054 / DSM 6125 / CFBP 8728 / NCIMB 11950 / KT2440).